A 96-amino-acid polypeptide reads, in one-letter code: Uteroglobin (96 aa).

The signal sequence occupies residues 1-21 (MKIAITMAVVMLSVCCSSASS).

This sequence belongs to the secretoglobin family. Antiparallel homodimer; disulfide-linked. Interaction with LMBR1L is controversial.

The protein resides in the secreted. Its function is as follows. Binds phosphatidylcholine, phosphatidylinositol, polychlorinated biphenyls (PCB) and weakly progesterone, potent inhibitor of phospholipase A2. The protein is Uteroglobin (SCGB1A1) of Mesocricetus auratus (Golden hamster).